Here is a 68-residue protein sequence, read N- to C-terminus: DNA-directed RNA polymerase subunit Rpo10 (68 aa).

Residues Cys7, Cys10, Cys44, and Cys45 each coordinate Zn(2+).

It belongs to the archaeal Rpo10/eukaryotic RPB10 RNA polymerase subunit family. Part of the RNA polymerase complex. Requires Zn(2+) as cofactor.

Its subcellular location is the cytoplasm. It carries out the reaction RNA(n) + a ribonucleoside 5'-triphosphate = RNA(n+1) + diphosphate. In terms of biological role, DNA-dependent RNA polymerase (RNAP) catalyzes the transcription of DNA into RNA using the four ribonucleoside triphosphates as substrates. This chain is DNA-directed RNA polymerase subunit Rpo10, found in Methanococcus vannielii (strain ATCC 35089 / DSM 1224 / JCM 13029 / OCM 148 / SB).